Consider the following 184-residue polypeptide: Peptide methionine sulfoxide reductase (184 aa).

Ser58 carries the phosphoserine modification.

Belongs to the MsrA Met sulfoxide reductase family.

It catalyses the reaction L-methionyl-[protein] + [thioredoxin]-disulfide + H2O = L-methionyl-(S)-S-oxide-[protein] + [thioredoxin]-dithiol. The catalysed reaction is [thioredoxin]-disulfide + L-methionine + H2O = L-methionine (S)-S-oxide + [thioredoxin]-dithiol. Functionally, has an important function as a repair enzyme for proteins that have been inactivated by oxidation. Catalyzes the reversible oxidation-reduction of methionine sulfoxide in proteins to methionine. Also able to reduce dimethyl sulfoxide (DMSO) as well, with DMS as the product. The protein is Peptide methionine sulfoxide reductase (MXR1) of Saccharomyces cerevisiae (strain ATCC 204508 / S288c) (Baker's yeast).